The sequence spans 382 residues: ATP phosphoribosyltransferase regulatory subunit (382 aa).

This sequence belongs to the class-II aminoacyl-tRNA synthetase family. HisZ subfamily. As to quaternary structure, heteromultimer composed of HisG and HisZ subunits.

It localises to the cytoplasm. Its pathway is amino-acid biosynthesis; L-histidine biosynthesis; L-histidine from 5-phospho-alpha-D-ribose 1-diphosphate: step 1/9. In terms of biological role, required for the first step of histidine biosynthesis. May allow the feedback regulation of ATP phosphoribosyltransferase activity by histidine. In Burkholderia multivorans (strain ATCC 17616 / 249), this protein is ATP phosphoribosyltransferase regulatory subunit.